The chain runs to 665 residues: Probable potassium transport system protein Kup (665 aa).

The segment covering 1–18 (MASEAPHASAPDCAPASS) has biased composition (low complexity). The segment at 1 to 31 (MASEAPHASAPDCAPASSDIPQQDGGSTNGH) is disordered. 12 helical membrane-spanning segments follow: residues 40–60 (FFALALGSVGVVFGDIGTSPL), 83–103 (VVSLALWALILIVTIKYVVFI), 131–151 (LVFVLGVAGAALFYGDAVITP), 171–191 (GVTNEVVLLIATVMLLGLFFI), 202–222 (LFGPVCAVWFGVMFSLGLMNL), 245–265 (GLTGFIVLGAVFLTVTGVEAL), 281–301 (WLFFVLPCLAMNYLGQGAFAL), 332–352 (LVLLAGAATVIASQAVITGAF), 380–400 (IFVPQLNTMLLLGVLAIMFTF), 409–429 (AYGLAVTGTMIVTTCMAFIVM), 435–455 (WSMPMALLFLVPFLALDITFL), and 462–482 (FFSGGWLPVLIGAALFTIMAT).

It belongs to the HAK/KUP transporter (TC 2.A.72) family.

It is found in the cell inner membrane. It carries out the reaction K(+)(in) + H(+)(in) = K(+)(out) + H(+)(out). Its function is as follows. Transport of potassium into the cell. Likely operates as a K(+):H(+) symporter. The polypeptide is Probable potassium transport system protein Kup (Caulobacter vibrioides (strain ATCC 19089 / CIP 103742 / CB 15) (Caulobacter crescentus)).